The sequence spans 609 residues: Alpha-fetoprotein (609 aa).

An N-terminal signal peptide occupies residues 1–18; sequence MKWVESIFLIFLLNFTES. Albumin domains follow at residues 19 to 210, 211 to 402, and 403 to 601; these read RTLH…ATVT, KELR…EELQ, and KYIQ…KLIS. His-22 lines the Cu(2+) pocket. Intrachain disulfides connect Cys-99–Cys-114, Cys-113–Cys-124, Cys-148–Cys-193, Cys-192–Cys-201, Cys-224–Cys-270, Cys-269–Cys-277, Cys-289–Cys-303, and Cys-302–Cys-313. Ser-111, Ser-115, and Ser-117 each carry phosphoserine; by FAM20C. Asn-251 carries N-linked (GlcNAc...) asparagine glycosylation. Phosphoserine; by FAM20C is present on Ser-344. Cystine bridges form between Cys-384/Cys-393, Cys-416/Cys-462, Cys-461/Cys-472, Cys-485/Cys-501, Cys-500/Cys-511, Cys-538/Cys-583, and Cys-582/Cys-591. 2 positions are modified to phosphoserine; by FAM20C: Ser-444 and Ser-445.

It belongs to the ALB/AFP/VDB family. Dimeric and trimeric forms have been found in addition to the monomeric form. Independent studies suggest heterogeneity of the N-terminal sequence of the mature protein and of the cleavage site of the signal sequence. In terms of processing, sulfated. In terms of tissue distribution, plasma. Synthesized by the fetal liver and yolk sac.

The protein localises to the secreted. Functionally, binds copper, nickel, and fatty acids as well as, and bilirubin less well than, serum albumin. Only a small percentage (less than 2%) of the human AFP shows estrogen-binding properties. This is Alpha-fetoprotein (AFP) from Homo sapiens (Human).